Here is a 31-residue protein sequence, read N- to C-terminus: Photosystem II reaction center protein T (31 aa).

A helical transmembrane segment spans residues Ala-3 to Phe-23.

The protein belongs to the PsbT family. In terms of assembly, PSII is composed of 1 copy each of membrane proteins PsbA, PsbB, PsbC, PsbD, PsbE, PsbF, PsbH, PsbI, PsbJ, PsbK, PsbL, PsbM, PsbT, PsbY, PsbZ, Psb30/Ycf12, at least 3 peripheral proteins of the oxygen-evolving complex and a large number of cofactors. It forms dimeric complexes.

It localises to the plastid. Its subcellular location is the chloroplast thylakoid membrane. Found at the monomer-monomer interface of the photosystem II (PS II) dimer, plays a role in assembly and dimerization of PSII. PSII is a light-driven water plastoquinone oxidoreductase, using light energy to abstract electrons from H(2)O, generating a proton gradient subsequently used for ATP formation. The chain is Photosystem II reaction center protein T from Tupiella akineta (Green alga).